The primary structure comprises 932 residues: 2-oxoglutarate dehydrogenase E1 component (932 aa).

The protein belongs to the alpha-ketoglutarate dehydrogenase family. In terms of assembly, homodimer. Part of the 2-oxoglutarate dehydrogenase (OGDH) complex composed of E1 (2-oxoglutarate dehydrogenase), E2 (dihydrolipoamide succinyltransferase) and E3 (dihydrolipoamide dehydrogenase); the complex contains multiple copies of the three enzymatic components (E1, E2 and E3). The cofactor is thiamine diphosphate.

The catalysed reaction is N(6)-[(R)-lipoyl]-L-lysyl-[protein] + 2-oxoglutarate + H(+) = N(6)-[(R)-S(8)-succinyldihydrolipoyl]-L-lysyl-[protein] + CO2. Its function is as follows. E1 component of the 2-oxoglutarate dehydrogenase (OGDH) complex which catalyzes the decarboxylation of 2-oxoglutarate, the first step in the conversion of 2-oxoglutarate to succinyl-CoA and CO(2). This Staphylococcus aureus (strain JH9) protein is 2-oxoglutarate dehydrogenase E1 component.